The primary structure comprises 753 residues: 5-methyltetrahydropteroyltriglutamate--homocysteine methyltransferase (753 aa).

5-methyltetrahydropteroyltri-L-glutamate contacts are provided by residues 17–20 (RELK) and K117. L-homocysteine is bound by residues 431–433 (IGS) and E484. Residues 431-433 (IGS) and E484 contribute to the L-methionine site. 5-methyltetrahydropteroyltri-L-glutamate contacts are provided by residues 515–516 (RC) and W561. D599 contacts L-homocysteine. D599 contacts L-methionine. Position 605 (E605) interacts with 5-methyltetrahydropteroyltri-L-glutamate. Residues H641, C643, and E665 each coordinate Zn(2+). Catalysis depends on H694, which acts as the Proton donor. Residue C726 coordinates Zn(2+).

This sequence belongs to the vitamin-B12 independent methionine synthase family. Requires Zn(2+) as cofactor.

The enzyme catalyses 5-methyltetrahydropteroyltri-L-glutamate + L-homocysteine = tetrahydropteroyltri-L-glutamate + L-methionine. It participates in amino-acid biosynthesis; L-methionine biosynthesis via de novo pathway; L-methionine from L-homocysteine (MetE route): step 1/1. Catalyzes the transfer of a methyl group from 5-methyltetrahydrofolate to homocysteine resulting in methionine formation. The sequence is that of 5-methyltetrahydropteroyltriglutamate--homocysteine methyltransferase from Escherichia coli (strain SMS-3-5 / SECEC).